We begin with the raw amino-acid sequence, 241 residues long: Acetoacetyl-CoA reductase (241 aa).

NADP(+) is bound by residues Arg-12 to Ile-14, Arg-39, and Asn-82 to Thr-86. Residues Asp-88 and Gln-141 to Gln-144 each bind substrate. Residue Tyr-147 is the Proton acceptor of the active site. Pro-177 to Ile-180 lines the NADP(+) pocket. Gly-178–Tyr-179 contributes to the substrate binding site.

The protein belongs to the short-chain dehydrogenases/reductases (SDR) family.

The protein resides in the cytoplasm. The catalysed reaction is a (3R)-3-hydroxyacyl-CoA + NADP(+) = a 3-oxoacyl-CoA + NADPH + H(+). It functions in the pathway biopolymer metabolism; poly-(R)-3-hydroxybutanoate biosynthesis. In Rhizobium meliloti (strain 1021) (Ensifer meliloti), this protein is Acetoacetyl-CoA reductase.